The following is a 123-amino-acid chain: Immunoglobulin lambda variable 5-39 (123 aa).

The signal sequence occupies residues 1–19 (MAWTPLLLLLLSHCTGSLS). A framework-1 region spans residues 20–44 (QPVLTQPTSLSASPGASARFTCTLR). The Ig-like domain occupies 21 to 123 (PVLTQPTSLS…YCAIWYSSTS (103 aa)). An intrachain disulfide couples Cys41 to Cys115. Residues 45–53 (SGINVGTYR) form a complementarity-determining-1 region. Residues 54-70 (IYWYQQKPGSLPRYLLR) form a framework-2 region. Positions 71-77 (YKSDSDK) are complementarity-determining-2. The interval 78 to 115 (QQGSGVPSRFSGSKDASTNAGLLLISGLQSEDEADYYC) is framework-3. The segment at 116-123 (AIWYSSTS) is complementarity-determining-3.

Immunoglobulins are composed of two identical heavy chains and two identical light chains; disulfide-linked.

The protein resides in the secreted. The protein localises to the cell membrane. V region of the variable domain of immunoglobulin light chains that participates in the antigen recognition. Immunoglobulins, also known as antibodies, are membrane-bound or secreted glycoproteins produced by B lymphocytes. In the recognition phase of humoral immunity, the membrane-bound immunoglobulins serve as receptors which, upon binding of a specific antigen, trigger the clonal expansion and differentiation of B lymphocytes into immunoglobulins-secreting plasma cells. Secreted immunoglobulins mediate the effector phase of humoral immunity, which results in the elimination of bound antigens. The antigen binding site is formed by the variable domain of one heavy chain, together with that of its associated light chain. Thus, each immunoglobulin has two antigen binding sites with remarkable affinity for a particular antigen. The variable domains are assembled by a process called V-(D)-J rearrangement and can then be subjected to somatic hypermutations which, after exposure to antigen and selection, allow affinity maturation for a particular antigen. This chain is Immunoglobulin lambda variable 5-39, found in Homo sapiens (Human).